The primary structure comprises 122 residues: Large ribosomal subunit protein uL14 (122 aa).

This sequence belongs to the universal ribosomal protein uL14 family. As to quaternary structure, part of the 50S ribosomal subunit. Forms a cluster with proteins L3 and L19. In the 70S ribosome, L14 and L19 interact and together make contacts with the 16S rRNA in bridges B5 and B8.

In terms of biological role, binds to 23S rRNA. Forms part of two intersubunit bridges in the 70S ribosome. This chain is Large ribosomal subunit protein uL14, found in Halothermothrix orenii (strain H 168 / OCM 544 / DSM 9562).